The chain runs to 969 residues: Leucine--tRNA ligase (969 aa).

The 'HIGH' region motif lies at 78 to 89; sequence PYPSGEGLHVGH. The 'KMSKS' region motif lies at 739-743; sequence KIGKS. Lys-742 lines the ATP pocket.

This sequence belongs to the class-I aminoacyl-tRNA synthetase family.

The protein localises to the cytoplasm. It catalyses the reaction tRNA(Leu) + L-leucine + ATP = L-leucyl-tRNA(Leu) + AMP + diphosphate. The chain is Leucine--tRNA ligase from Mycobacterium tuberculosis (strain ATCC 25177 / H37Ra).